An 89-amino-acid polypeptide reads, in one-letter code: uncharacterized protein (89 aa).

The next 3 helical transmembrane spans lie at 5–27 (TLTE…GFTA), 32–51 (LYIG…KRLL), and 63–85 (LFFS…ALVA).

It is found in the cell membrane. This is an uncharacterized protein from Bacillus subtilis (strain 168).